A 234-amino-acid polypeptide reads, in one-letter code: tRNA (guanine-N(1)-)-methyltransferase (234 aa).

S-adenosyl-L-methionine-binding positions include Gly115 and 135 to 140 (VGDYIL).

This sequence belongs to the RNA methyltransferase TrmD family. Homodimer.

It is found in the cytoplasm. The catalysed reaction is guanosine(37) in tRNA + S-adenosyl-L-methionine = N(1)-methylguanosine(37) in tRNA + S-adenosyl-L-homocysteine + H(+). Functionally, specifically methylates guanosine-37 in various tRNAs. This is tRNA (guanine-N(1)-)-methyltransferase from Rickettsia typhi (strain ATCC VR-144 / Wilmington).